Reading from the N-terminus, the 142-residue chain is AP-2 complex subunit sigma (142 aa).

It belongs to the adaptor complexes small subunit family. In terms of assembly, adaptor protein complex 2 (AP-2) is a heterotetramer composed of two large adaptins (alpha-type and beta-type subunits), a medium adaptin (mu-type subunit) and a small adaptin (sigma-type subunit).

The protein resides in the cell membrane. Its subcellular location is the membrane. The protein localises to the coated pit. Subunit of the adaptor protein complex 2 (AP-2). Adaptor protein complexes function in protein transport via transport vesicles in different membrane traffic pathways. Adaptor protein complexes are vesicle coat components and appear to be involved in cargo selection and vesicle formation. AP-2 is involved in clathrin-dependent endocytosis in which cargo proteins are incorporated into vesicles surrounded by clathrin (clathrin-coated vesicles, CCVs) which are destined for fusion with the early endosome. The complex binds polyphosphoinositides. This is AP-2 complex subunit sigma (AP17) from Arabidopsis thaliana (Mouse-ear cress).